Consider the following 80-residue polypeptide: Large ribosomal subunit protein bL31B (80 aa).

It belongs to the bacterial ribosomal protein bL31 family. Type B subfamily. Part of the 50S ribosomal subunit.

This chain is Large ribosomal subunit protein bL31B, found in Exiguobacterium sp. (strain ATCC BAA-1283 / AT1b).